A 69-amino-acid polypeptide reads, in one-letter code: Sec-independent protein translocase protein TatA (69 aa).

The helical transmembrane segment at 1–21 threads the bilayer; it reads MFGLGTMEMVIILVIVLVIFG. The segment at 44–69 is disordered; the sequence is NAEDDAPAEPEVSKPAAAESTEKKDA.

Belongs to the TatA/E family. As to quaternary structure, the Tat system comprises two distinct complexes: a TatABC complex, containing multiple copies of TatA, TatB and TatC subunits, and a separate TatA complex, containing only TatA subunits. Substrates initially bind to the TatABC complex, which probably triggers association of the separate TatA complex to form the active translocon.

The protein resides in the cell inner membrane. Part of the twin-arginine translocation (Tat) system that transports large folded proteins containing a characteristic twin-arginine motif in their signal peptide across membranes. TatA could form the protein-conducting channel of the Tat system. The sequence is that of Sec-independent protein translocase protein TatA from Magnetococcus marinus (strain ATCC BAA-1437 / JCM 17883 / MC-1).